The following is a 148-amino-acid chain: 3-dehydroquinate dehydratase (148 aa).

Residue tyrosine 23 is the Proton acceptor of the active site. Substrate contacts are provided by asparagine 75, histidine 81, and aspartate 88. Catalysis depends on histidine 101, which acts as the Proton donor. Residues 102–103 and arginine 112 each bind substrate; that span reads IS.

Belongs to the type-II 3-dehydroquinase family. In terms of assembly, homododecamer.

The enzyme catalyses 3-dehydroquinate = 3-dehydroshikimate + H2O. It participates in metabolic intermediate biosynthesis; chorismate biosynthesis; chorismate from D-erythrose 4-phosphate and phosphoenolpyruvate: step 3/7. In terms of biological role, catalyzes a trans-dehydration via an enolate intermediate. The chain is 3-dehydroquinate dehydratase from Methylococcus capsulatus (strain ATCC 33009 / NCIMB 11132 / Bath).